The sequence spans 400 residues: Enoyl-[acyl-carrier-protein] reductase [NADH] (400 aa).

NAD(+)-binding positions include 48-53 (GSSSGY), 74-75 (FE), 111-112 (DA), and 139-140 (LA). Tyr225 serves as a coordination point for substrate. The active-site Proton donor is Tyr235. NAD(+) contacts are provided by residues Lys244 and 273-275 (VVT).

The protein belongs to the TER reductase family. In terms of assembly, monomer.

The catalysed reaction is a 2,3-saturated acyl-[ACP] + NAD(+) = a (2E)-enoyl-[ACP] + NADH + H(+). The protein operates within lipid metabolism; fatty acid biosynthesis. Its function is as follows. Involved in the final reduction of the elongation cycle of fatty acid synthesis (FAS II). Catalyzes the reduction of a carbon-carbon double bond in an enoyl moiety that is covalently linked to an acyl carrier protein (ACP). This chain is Enoyl-[acyl-carrier-protein] reductase [NADH], found in Shewanella pealeana (strain ATCC 700345 / ANG-SQ1).